Reading from the N-terminus, the 235-residue chain is MHWAAAVAIFFIVVTKFLQYTNKYHEKWISKFAPGNELSKKYLAKVKERHELKEFNNSISAQDNYAKWTKNNRKLDSLDKEINNLKDEIQSENKAFQAHLHKLRLLALTVPFFVFKIMYGKTPVYKLSSSTSTLFPTFVSGVWSQGWLYVLLHPLRTISQKWHIMEGKFGASKFDDMALQSVSLGIWVWALMNVINGVEFIVKQLFLTPKMEAPASVETQEEKALDAVDDAIILD.

Residue methionine 1 is a topological domain, lumenal. A helical transmembrane segment spans residues 2-21; it reads HWAAAVAIFFIVVTKFLQYT. Residues 22-104 are Cytoplasmic-facing; it reads NKYHEKWISK…AFQAHLHKLR (83 aa). The stretch at 68–104 forms a coiled coil; it reads WTKNNRKLDSLDKEINNLKDEIQSENKAFQAHLHKLR. The chain crosses the membrane as a helical span at residues 105-125; sequence LLALTVPFFVFKIMYGKTPVY. Over 126 to 181 the chain is Lumenal; sequence KLSSSTSTLFPTFVSGVWSQGWLYVLLHPLRTISQKWHIMEGKFGASKFDDMALQS. The chain crosses the membrane as a helical span at residues 182–198; sequence VSLGIWVWALMNVINGV. Residues 199 to 235 are Cytoplasmic-facing; it reads EFIVKQLFLTPKMEAPASVETQEEKALDAVDDAIILD.

It belongs to the WRB/GET1 family. Component of the Golgi to ER traffic (GET) complex, which is composed of GET1, GET2 and GET3. Within the complex, GET1 and GET2 form a heterotetramer which is stabilized by phosphatidylinositol binding and which binds to the GET3 homodimer.

Its subcellular location is the endoplasmic reticulum membrane. The protein localises to the golgi apparatus membrane. In terms of biological role, required for the post-translational delivery of tail-anchored (TA) proteins to the endoplasmic reticulum. Together with GET2, acts as a membrane receptor for soluble GET3, which recognizes and selectively binds the transmembrane domain of TA proteins in the cytosol. The GET complex cooperates with the HDEL receptor ERD2 to mediate the ATP-dependent retrieval of resident ER proteins that contain a C-terminal H-D-E-L retention signal from the Golgi to the ER. The chain is Golgi to ER traffic protein 1 from Saccharomyces cerevisiae (strain RM11-1a) (Baker's yeast).